The following is a 266-amino-acid chain: Putative pyruvate, phosphate dikinase regulatory protein (266 aa).

149–156 (GVSRTSKT) is an ADP binding site.

Belongs to the pyruvate, phosphate/water dikinase regulatory protein family. PDRP subfamily.

It carries out the reaction N(tele)-phospho-L-histidyl/L-threonyl-[pyruvate, phosphate dikinase] + ADP = N(tele)-phospho-L-histidyl/O-phospho-L-threonyl-[pyruvate, phosphate dikinase] + AMP + H(+). The catalysed reaction is N(tele)-phospho-L-histidyl/O-phospho-L-threonyl-[pyruvate, phosphate dikinase] + phosphate + H(+) = N(tele)-phospho-L-histidyl/L-threonyl-[pyruvate, phosphate dikinase] + diphosphate. Functionally, bifunctional serine/threonine kinase and phosphorylase involved in the regulation of the pyruvate, phosphate dikinase (PPDK) by catalyzing its phosphorylation/dephosphorylation. This is Putative pyruvate, phosphate dikinase regulatory protein from Geobacillus kaustophilus (strain HTA426).